We begin with the raw amino-acid sequence, 997 residues long: Pro-apoptotic serine protease NMA111 (997 aa).

The disordered stretch occupies residues 1–43 (MTISLSNIKKRDHSKISDGTSGESSLVKRKQLESATGDQEEEY). The tract at residues 83 to 273 (VVSIHFSQVA…LPLDRILRAL (191 aa)) is serine protease. Active-site charge relay system residues include His-121, Asp-152, and Ser-235. PDZ domains lie at 300 to 378 (RRLG…QRGG) and 779 to 854 (EEWI…VRDG).

This sequence belongs to the peptidase S1C family. In terms of assembly, interacts with BIR1.

It localises to the nucleus. Functionally, nuclear serine protease which mediates apoptosis through proteolysis of the apoptotic inhibitor BIR1. This is Pro-apoptotic serine protease NMA111 (NMA111) from Saccharomyces cerevisiae (strain YJM789) (Baker's yeast).